The following is a 474-amino-acid chain: tRNA (guanine(37)-N(1))-methyltransferase (474 aa).

Residues His-234, 274-275 (DL), 303-304 (DA), and Asn-345 each bind S-adenosyl-L-methionine. Acidic residues predominate over residues 452–464 (EPEAQCESEEAEE). Positions 452-474 (EPEAQCESEEAEEPSSKRIKVDT) are disordered. Basic and acidic residues predominate over residues 465 to 474 (PSSKRIKVDT).

This sequence belongs to the class I-like SAM-binding methyltransferase superfamily. TRM5/TYW2 family. In terms of assembly, monomer.

It localises to the mitochondrion matrix. The protein resides in the nucleus. The protein localises to the cytoplasm. The enzyme catalyses guanosine(37) in tRNA + S-adenosyl-L-methionine = N(1)-methylguanosine(37) in tRNA + S-adenosyl-L-homocysteine + H(+). In terms of biological role, specifically methylates the N1 position of guanosine-37 in various cytoplasmic and mitochondrial tRNAs. Methylation is not dependent on the nature of the nucleoside 5' of the target nucleoside. This is the first step in the biosynthesis of wybutosine (yW), a modified base adjacent to the anticodon of tRNAs and required for accurate decoding. This is tRNA (guanine(37)-N(1))-methyltransferase from Caenorhabditis elegans.